The primary structure comprises 127 residues: Small ribosomal subunit protein uS11 (127 aa).

This sequence belongs to the universal ribosomal protein uS11 family. Part of the 30S ribosomal subunit. Interacts with proteins S7 and S18. Binds to IF-3.

In terms of biological role, located on the platform of the 30S subunit, it bridges several disparate RNA helices of the 16S rRNA. Forms part of the Shine-Dalgarno cleft in the 70S ribosome. This is Small ribosomal subunit protein uS11 from Chlorobium limicola (strain DSM 245 / NBRC 103803 / 6330).